The primary structure comprises 449 residues: Allantoinase (449 aa).

Residues His59, His61, Lys146, His182, His238, and Asp311 each coordinate Zn(2+). Lys146 is subject to N6-carboxylysine.

This sequence belongs to the metallo-dependent hydrolases superfamily. Allantoinase family. As to quaternary structure, homotetramer. Zn(2+) serves as cofactor. Carboxylation allows a single lysine to coordinate two zinc ions.

It catalyses the reaction (S)-allantoin + H2O = allantoate + H(+). Its pathway is nitrogen metabolism; (S)-allantoin degradation; allantoate from (S)-allantoin: step 1/1. Its function is as follows. Catalyzes the conversion of allantoin (5-ureidohydantoin) to allantoic acid by hydrolytic cleavage of the five-member hydantoin ring. The polypeptide is Allantoinase (Deinococcus geothermalis (strain DSM 11300 / CIP 105573 / AG-3a)).